Reading from the N-terminus, the 214-residue chain is Adenylate kinase (214 aa).

Position 10–15 (10–15) interacts with ATP; that stretch reads GAGKGT. Positions 30–59 are NMP; sequence STGDMLRGAIKAGTDLGKQAKTLMDAGQLV. AMP is bound by residues Thr31, Arg36, 57 to 59, 85 to 88, and Gln92; these read QLV and GFPR. Positions 122 to 159 are LID; sequence GRRVHQASGRTYHVVYNPPKVEGKDDVTGEDLIIRADD. ATP contacts are provided by residues Arg123 and 132–133; that span reads TY. Arg156 and Arg167 together coordinate AMP. An ATP-binding site is contributed by Lys200.

This sequence belongs to the adenylate kinase family. Monomer.

It localises to the cytoplasm. The catalysed reaction is AMP + ATP = 2 ADP. Its pathway is purine metabolism; AMP biosynthesis via salvage pathway; AMP from ADP: step 1/1. Its function is as follows. Catalyzes the reversible transfer of the terminal phosphate group between ATP and AMP. Plays an important role in cellular energy homeostasis and in adenine nucleotide metabolism. The chain is Adenylate kinase from Pasteurella multocida (strain Pm70).